Here is a 360-residue protein sequence, read N- to C-terminus: mRNA cap guanine-N(7) methyltransferase (360 aa).

A disordered region spans residues 1 to 62 (MSSSNSRVHE…NRHENNGNAQ (62 aa)). The segment covering 7–19 (RVHEEQPPTENRR) has biased composition (basic and acidic residues). The region spanning 83-358 (SPIIQLKRFN…FYLAFAFEKR (276 aa)) is the mRNA cap 0 methyltransferase domain. 92–93 (NN) is an mRNA binding site. S-adenosyl-L-methionine is bound by residues Lys-96, Gly-118, Asp-140, Asp-168, Gln-191, and Tyr-196.

It belongs to the class I-like SAM-binding methyltransferase superfamily. mRNA cap 0 methyltransferase family. In terms of assembly, interacts with cdk9.

It is found in the nucleus. The catalysed reaction is a 5'-end (5'-triphosphoguanosine)-ribonucleoside in mRNA + S-adenosyl-L-methionine = a 5'-end (N(7)-methyl 5'-triphosphoguanosine)-ribonucleoside in mRNA + S-adenosyl-L-homocysteine. Responsible for methylating the 5'-cap structure of mRNAs. This chain is mRNA cap guanine-N(7) methyltransferase (pcm1), found in Schizosaccharomyces pombe (strain 972 / ATCC 24843) (Fission yeast).